The primary structure comprises 477 residues: Sucrose-6-phosphate hydrolase (477 aa).

Substrate is bound by residues 36 to 39 (WMND), Gln55, Trp63, 98 to 99 (FS), 160 to 161 (RD), Glu215, and Trp298. Asp39 is an active-site residue.

It belongs to the glycosyl hydrolase 32 family.

It is found in the cytoplasm. It catalyses the reaction Hydrolysis of terminal non-reducing beta-D-fructofuranoside residues in beta-D-fructofuranosides.. The protein operates within glycan biosynthesis; sucrose metabolism. In terms of biological role, enables the bacterium to metabolize sucrose as a sole carbon source. The chain is Sucrose-6-phosphate hydrolase (cscA) from Escherichia coli.